Here is a 481-residue protein sequence, read N- to C-terminus: Cysteine--tRNA ligase (481 aa).

Cys27 serves as a coordination point for Zn(2+). The 'HIGH' region motif lies at 29–39 (PTVYNYAHIGN). Positions 222, 247, and 251 each coordinate Zn(2+). A 'KMSKS' region motif is present at residues 279-283 (KMSKS). Lys282 provides a ligand contact to ATP.

The protein belongs to the class-I aminoacyl-tRNA synthetase family. In terms of assembly, monomer. The cofactor is Zn(2+).

The protein resides in the cytoplasm. The enzyme catalyses tRNA(Cys) + L-cysteine + ATP = L-cysteinyl-tRNA(Cys) + AMP + diphosphate. This chain is Cysteine--tRNA ligase, found in Borrelia turicatae (strain 91E135).